The chain runs to 729 residues: Phosphoribosylformylglycinamidine synthase subunit PurL (729 aa).

Residue histidine 54 is part of the active site. Residues tyrosine 57 and lysine 96 each contribute to the ATP site. Glutamate 98 contributes to the Mg(2+) binding site. Substrate-binding positions include 99-102 and arginine 121; that span reads SHNH. Histidine 100 functions as the Proton acceptor in the catalytic mechanism. Position 122 (aspartate 122) interacts with Mg(2+). Glutamine 245 serves as a coordination point for substrate. Position 273 (aspartate 273) interacts with Mg(2+). Position 317–319 (317–319) interacts with substrate; the sequence is ETQ. Positions 495 and 532 each coordinate ATP. Mg(2+) is bound at residue asparagine 533. Residue serine 535 participates in substrate binding.

It belongs to the FGAMS family. Monomer. Part of the FGAM synthase complex composed of 1 PurL, 1 PurQ and 2 PurS subunits.

The protein resides in the cytoplasm. It catalyses the reaction N(2)-formyl-N(1)-(5-phospho-beta-D-ribosyl)glycinamide + L-glutamine + ATP + H2O = 2-formamido-N(1)-(5-O-phospho-beta-D-ribosyl)acetamidine + L-glutamate + ADP + phosphate + H(+). The protein operates within purine metabolism; IMP biosynthesis via de novo pathway; 5-amino-1-(5-phospho-D-ribosyl)imidazole from N(2)-formyl-N(1)-(5-phospho-D-ribosyl)glycinamide: step 1/2. Functionally, part of the phosphoribosylformylglycinamidine synthase complex involved in the purines biosynthetic pathway. Catalyzes the ATP-dependent conversion of formylglycinamide ribonucleotide (FGAR) and glutamine to yield formylglycinamidine ribonucleotide (FGAM) and glutamate. The FGAM synthase complex is composed of three subunits. PurQ produces an ammonia molecule by converting glutamine to glutamate. PurL transfers the ammonia molecule to FGAR to form FGAM in an ATP-dependent manner. PurS interacts with PurQ and PurL and is thought to assist in the transfer of the ammonia molecule from PurQ to PurL. This Staphylococcus epidermidis (strain ATCC 35984 / DSM 28319 / BCRC 17069 / CCUG 31568 / BM 3577 / RP62A) protein is Phosphoribosylformylglycinamidine synthase subunit PurL.